Here is a 378-residue protein sequence, read N- to C-terminus: MEVKPPPGRPQPDSGRRRRRRGEEGHDPKEPEQLRKLFIGGLSFETTDDSLREHFEKWGTLTDCVVMRDPQTKRSRGFGFVTYSCVEEVDAAMCARPHKVDGRVVEPKRAVSREDSVKPGAHLTVKKIFVGGIKEDTEEYNLRDYFEKYGKIETIEVMEDRQSGKKRGFAFVTFDDHDTVDKIVVQKYHTINGHNCEVKKALSKQEMQSAGSQRGRGGGSGNFMGRGGNFGGGGGNFGRGGNFGGRGGYGGGGGGSRGSYGGGDGGYNGFGGDGGNYGGGPGYSSRGGYGGGGPGYGNQGGGYGGGGGYDGYNEGGNFGGGNYGGGGNYNDFGNYSGQQQSNYGPMKGGSFGGRSSGSPYGGGYGSGGGSGGYGSRRF.

N-acetylmethionine is present on Met1. The segment covering Met1–Pro10 has biased composition (pro residues). Residues Met1–Leu34 are disordered. Lys4 is covalently cross-linked (Glycyl lysine isopeptide (Lys-Gly) (interchain with G-Cter in SUMO2)). Ser14 carries the post-translational modification Phosphoserine. A compositionally biased stretch (basic and acidic residues) spans Arg21–Leu34. An RRM 1 domain is found at Arg35–Lys118. Residue Lys36 forms a Glycyl lysine isopeptide (Lys-Gly) (interchain with G-Cter in SUMO2) linkage. Ser43 carries the phosphoserine modification. Arg52 is modified (dimethylated arginine; alternate). Arg52 carries the post-translational modification Omega-N-methylarginine; alternate. An Omega-N-methylarginine modification is found at Arg76. Residues Ser112 and Ser116 each carry the phosphoserine modification. A Glycyl lysine isopeptide (Lys-Gly) (interchain with G-Cter in SUMO2) cross-link involves residue Lys118. Thr124 carries the post-translational modification Phosphothreonine. The RRM 2 domain maps to Lys126–Gln205. Lys134 carries the post-translational modification N6-acetyllysine; alternate. Residue Lys134 forms a Glycyl lysine isopeptide (Lys-Gly) (interchain with G-Cter in SUMO2); alternate linkage. Glycyl lysine isopeptide (Lys-Gly) (interchain with G-Cter in SUMO2) cross-links involve residues Lys151 and Lys182. The interval Lys204–Gly225 is disordered. Omega-N-methylarginine; alternate occurs at positions 214, 216, 226, 239, and 246. Arg214, Arg216, Arg226, Arg239, and Arg246 each carry asymmetric dimethylarginine; alternate. Over residues Arg214–Gly225 the composition is skewed to gly residues. At Arg257 the chain carries Omega-N-methylarginine. Arg286 carries the post-translational modification Asymmetric dimethylarginine. Residues Ser336–Phe378 are disordered. Over residues Met346–Phe378 the composition is skewed to gly residues. Position 350 is a phosphoserine (Ser350). Arg354 bears the Omega-N-methylarginine mark. Position 358 is a phosphoserine (Ser358). Phosphotyrosine occurs at positions 360 and 364. 2 positions are modified to phosphoserine: Ser366 and Ser370. Tyr373 is subject to Phosphotyrosine. Phosphoserine is present on Ser375.

Identified in the spliceosome C complex.

It is found in the nucleus. Its function is as follows. Plays a role in cytoplasmic trafficking of RNA. Binds to the cis-acting response element, A2RE. May be involved in pre-mRNA splicing. The protein is Heterogeneous nuclear ribonucleoprotein A3 (HNRNPA3) of Homo sapiens (Human).